The chain runs to 520 residues: Retinoic acid receptor RXR-beta (520 aa).

The tract at residues 1–167 is disordered; it reads MSWATRPPFL…GGSGPPEDVK (167 aa). The modulating stretch occupies residues 1 to 191; it reads MSWATRPPFL…PGGPGAGKRL (191 aa). Arg-25 is subject to Omega-N-methylarginine. A compositionally biased stretch (basic and acidic residues) spans 64–79; sequence EAGRDGMGDSGRDSRS. Pro residues predominate over residues 95–118; that stretch reads SSPPGPPLTPSAPPPPMPPPPLGS. Over residues 119–130 the composition is skewed to low complexity; that stretch reads PFPVISSSMGSP. Pro residues predominate over residues 131–140; the sequence is GLPPPAPPGF. 2 consecutive NR C4-type zinc fingers follow at residues 192-212 and 228-252; these read CAIC…CEGC and CRDN…YQKC. The nuclear receptor DNA-binding region spans 192-257; sequence CAICGDRSSG…RYQKCLATGM (66 aa). The hinge stretch occupies residues 258–382; it reads KREAVQEERQ…HRSIDVRDGI (125 aa). Basic and acidic residues predominate over residues 263-275; that stretch reads QEERQRGKDKDGD. Disordered regions lie at residues 263–285 and 300–323; these read QEER…APEE and QKSD…NDPV. The region spanning 283-516 is the NR LBD domain; the sequence is PEEMPVDRIL…TFLMEMLEAP (234 aa). The segment covering 307-317 has biased composition (gly residues); the sequence is EGPGATGGGGS.

Belongs to the nuclear hormone receptor family. NR2 subfamily. Homodimer (in vitro). Heterodimer with other retinoic acid receptor family members. Binds DNA preferentially as a RAR/RXR heterodimer. Interacts with NR1H3. Interacts with AKAP13. In terms of tissue distribution, in all tissues tested, including brain, thymus, spleen and liver.

The protein resides in the nucleus. The protein localises to the cytoplasm. Its function is as follows. Receptor for retinoic acid. Retinoic acid receptors bind as heterodimers to their target response elements in response to their ligands, all-trans or 9-cis retinoic acid, and regulate gene expression in various biological processes. The RAR/RXR heterodimers bind to the retinoic acid response elements (RARE). In Mus musculus (Mouse), this protein is Retinoic acid receptor RXR-beta (Rxrb).